Consider the following 468-residue polypeptide: GDNF family receptor alpha-1 (468 aa).

Positions 1–24 (MFLATLYFALPLLDLLMSAEVSGG) are cleaved as a signal peptide. 3 repeat units span residues 25–113 (DRLD…LQGN), 150–238 (KGNN…YEER), and 239–342 (ERPN…KNAI). Cys36 and Cys42 are oxidised to a cystine. The N-linked (GlcNAc...) asparagine glycan is linked to Asn59. Intrachain disulfides connect Cys154–Cys214, Cys161–Cys167, Cys178–Cys192, Cys187–Cys233, Cys216–Cys221, Cys243–Cys313, Cys250–Cys256, Cys267–Cys285, Cys277–Cys337, and Cys315–Cys325. 2 N-linked (GlcNAc...) asparagine glycosylation sites follow: Asn347 and Asn406. Residue Ser430 is the site of GPI-anchor amidated serine attachment. Positions 431-468 (HITTKSMAAPPSCSLSSLPVLMLTALAALLSVSLAETS) are cleaved as a propeptide — removed in mature form.

It belongs to the GDNFR family. In terms of assembly, interacts with GDNF ligand and RET: forms a 2:2:2 ternary complex composed of GDNF ligand, GFRA1 and RET receptor. Interacts with SORL1, either alone or in complex with GDNF. Interaction between SORL1 and GFRA1 leads to GFRA1 internalization, but not degradation. In terms of tissue distribution, expressed in liver, brain, kidney and cochlea.

Its subcellular location is the cell membrane. It localises to the golgi apparatus. The protein localises to the trans-Golgi network. It is found in the endosome. The protein resides in the multivesicular body. Its function is as follows. Coreceptor for GDNF, a neurotrophic factor that enhances survival and morphological differentiation of dopaminergic neurons and increases their high-affinity dopamine uptake. GDNF-binding leads to autophosphorylation and activation of the RET receptor. The chain is GDNF family receptor alpha-1 (Gfra1) from Rattus norvegicus (Rat).